Reading from the N-terminus, the 295-residue chain is Protoheme IX farnesyltransferase (295 aa).

9 consecutive transmembrane segments (helical) span residues 27–46 (IMYL…PGSI), 50–72 (IAII…NMWY), 93–115 (ISKS…VMMI), 119–136 (YISG…SFAY), 148–168 (IVIG…SVTS), 175–195 (LILF…LSLL), 219–239 (VHIL…GLFL), 244–264 (LYEI…FKVF), and 275–295 (MFTY…LASF).

This sequence belongs to the UbiA prenyltransferase family. Protoheme IX farnesyltransferase subfamily.

Its subcellular location is the cell inner membrane. The enzyme catalyses heme b + (2E,6E)-farnesyl diphosphate + H2O = Fe(II)-heme o + diphosphate. It participates in porphyrin-containing compound metabolism; heme O biosynthesis; heme O from protoheme: step 1/1. Converts heme B (protoheme IX) to heme O by substitution of the vinyl group on carbon 2 of heme B porphyrin ring with a hydroxyethyl farnesyl side group. The sequence is that of Protoheme IX farnesyltransferase from Ehrlichia canis (strain Jake).